Consider the following 89-residue polypeptide: Small ribosomal subunit protein uS15 (89 aa).

The segment covering M1–D21 has biased composition (basic and acidic residues). The disordered stretch occupies residues M1 to G23.

This sequence belongs to the universal ribosomal protein uS15 family. In terms of assembly, part of the 30S ribosomal subunit. Forms a bridge to the 50S subunit in the 70S ribosome, contacting the 23S rRNA.

In terms of biological role, one of the primary rRNA binding proteins, it binds directly to 16S rRNA where it helps nucleate assembly of the platform of the 30S subunit by binding and bridging several RNA helices of the 16S rRNA. Functionally, forms an intersubunit bridge (bridge B4) with the 23S rRNA of the 50S subunit in the ribosome. The protein is Small ribosomal subunit protein uS15 of Rhodospirillum rubrum (strain ATCC 11170 / ATH 1.1.1 / DSM 467 / LMG 4362 / NCIMB 8255 / S1).